The chain runs to 174 residues: Transcriptional repressor NrdR (174 aa).

A zinc finger spans residues 3–34; the sequence is CPFCQHSDTRVIDSRVSEDGTTIRRRRECEAC. In terms of domain architecture, ATP-cone spans 49–139; that stretch reads PTVVKSDGGR…VYRSFQDVAD (91 aa).

This sequence belongs to the NrdR family. Zn(2+) is required as a cofactor.

Functionally, negatively regulates transcription of bacterial ribonucleotide reductase nrd genes and operons by binding to NrdR-boxes. The polypeptide is Transcriptional repressor NrdR (Xanthomonas oryzae pv. oryzae (strain MAFF 311018)).